Consider the following 246-residue polypeptide: Probable transcriptional regulatory protein BVU_3469 (246 aa).

This sequence belongs to the TACO1 family.

The protein resides in the cytoplasm. The chain is Probable transcriptional regulatory protein BVU_3469 from Phocaeicola vulgatus (strain ATCC 8482 / DSM 1447 / JCM 5826 / CCUG 4940 / NBRC 14291 / NCTC 11154) (Bacteroides vulgatus).